The following is a 435-amino-acid chain: Serine hydroxymethyltransferase 2 (435 aa).

(6S)-5,6,7,8-tetrahydrofolate contacts are provided by residues Leu135 and 139 to 141; that span reads GHL. An N6-(pyridoxal phosphate)lysine modification is found at Lys244. Position 260 (Glu260) interacts with (6S)-5,6,7,8-tetrahydrofolate.

This sequence belongs to the SHMT family. As to quaternary structure, homodimer. Requires pyridoxal 5'-phosphate as cofactor.

It is found in the cytoplasm. It carries out the reaction (6R)-5,10-methylene-5,6,7,8-tetrahydrofolate + glycine + H2O = (6S)-5,6,7,8-tetrahydrofolate + L-serine. It participates in one-carbon metabolism; tetrahydrofolate interconversion. Its pathway is amino-acid biosynthesis; glycine biosynthesis; glycine from L-serine: step 1/1. Its function is as follows. Catalyzes the reversible interconversion of serine and glycine with tetrahydrofolate (THF) serving as the one-carbon carrier. This reaction serves as the major source of one-carbon groups required for the biosynthesis of purines, thymidylate, methionine, and other important biomolecules. Also exhibits THF-independent aldolase activity toward beta-hydroxyamino acids, producing glycine and aldehydes, via a retro-aldol mechanism. The chain is Serine hydroxymethyltransferase 2 from Vibrio cholerae serotype O1 (strain ATCC 39315 / El Tor Inaba N16961).